Here is a 448-residue protein sequence, read N- to C-terminus: Exoglucanase GH7B (448 aa).

A signal peptide spans 1–17 (MSLAVVFLLGFLAVSHG). The residue at position 18 (Gln-18) is a Pyrrolidone carboxylic acid. Disulfide bonds link Cys-62/Cys-83 and Cys-73/Cys-79. Substrate contacts are provided by residues Tyr-97, 119 to 120 (DI), and Lys-197. 6 cysteine pairs are disulfide-bonded: Cys-154–Cys-415, Cys-188–Cys-226, Cys-192–Cys-225, Cys-246–Cys-271, Cys-254–Cys-259, and Cys-276–Cys-350. Catalysis depends on Glu-228, which acts as the Nucleophile. Residues 230 to 233 (DIWE) and His-244 contribute to the substrate site. Glu-233 functions as the Proton donor/acceptor in the catalytic mechanism. Arg-266 and Asp-274 together coordinate substrate. Substrate contacts are provided by Trp-396 and Arg-412.

The protein belongs to the glycosyl hydrolase 7 (cellulase C) family. As to quaternary structure, monomer. As to expression, highly expressed in the hepatopancreas (at protein level). Little or no expression detected in the hindgut or the rest of the body (at protein level).

The protein resides in the secreted. It catalyses the reaction Hydrolysis of (1-&gt;4)-beta-D-glucosidic linkages in cellulose and cellotetraose, releasing cellobiose from the non-reducing ends of the chains.. Its function is as follows. Exocellobiohydrolase (CBH) that catalyzes the hydrolysis of 1,4-beta-D-glucosidic bonds in cellulose to release the disaccharide cellobiose. The degradation of cellulose involves an interplay between different cellulolytic enzymes. Hydrolysis starts with endoglucanases (EGs), which cut internal beta-1,4-glucosidic bonds in cellulose to reduce the polymerization degree of the substrate and create new chain ends for exocellobiohydrolases (CBHs). The CBHs release the disaccharide cellobiose from the non-reducing end of the cellulose polymer chain. Finally, beta-1,4-glucosidases hydrolyze the cellobiose and other short cello-oligosaccharides into glucose units. The sequence is that of Exoglucanase GH7B from Limnoria quadripunctata (Gribble).